The primary structure comprises 131 residues: DNA-directed RNA polymerases I, II, and III subunit RPABC2 (131 aa).

Residues M1 to D24 are disordered.

It belongs to the archaeal Rpo6/eukaryotic RPB6 RNA polymerase subunit family. Component of the RNA polymerase I (Pol I), RNA polymerase II (Pol II) and RNA polymerase III (Pol III) complexes consisting of at least 13, 12 and 17 subunits, respectively.

The protein resides in the nucleus. Its function is as follows. DNA-dependent RNA polymerases catalyze the transcription of DNA into RNA using the four ribonucleoside triphosphates as substrates. Common component of RNA polymerases I, II and III which synthesize ribosomal RNA precursors, mRNA precursors and many functional non-coding RNAs, and small RNAs, such as 5S rRNA and tRNAs, respectively. Pol II is the central component of the basal RNA polymerase II transcription machinery. Pols are composed of mobile elements that move relative to each other. In Pol II, Polr2F/RPB6 is part of the clamp element and together with parts of Polr2A/RPB1 and RPB2 forms a pocket to which the Polr2D/RPB4-Polr2G/RPB7 subcomplex binds. This chain is DNA-directed RNA polymerases I, II, and III subunit RPABC2, found in Drosophila melanogaster (Fruit fly).